Here is a 322-residue protein sequence, read N- to C-terminus: Elongation factor Ts, mitochondrial (322 aa).

The protein belongs to the EF-Ts family.

It is found in the mitochondrion. Its function is as follows. Associates with the EF-Tu.GDP complex and induces the exchange of GDP to GTP. It remains bound to the aminoacyl-tRNA.EF-Tu.GTP complex up to the GTP hydrolysis stage on the ribosome. The polypeptide is Elongation factor Ts, mitochondrial (Chlamydomonas reinhardtii (Chlamydomonas smithii)).